The chain runs to 198 residues: MRAPAQVRTLRWSLGWPGSRGRDVFAALRCAQALRCQPLGSALPPQAPTRDLGRPQAFDSSRTPGPRPPRSTLRMMETKSPTSPSYGARGKVPPGAGPGSPLSRGAGQGAPLSETRFHHVAQAFLKLLSSSNPPTSASESARIIGVSHCTQPQVASLSDRHCSKVNHTVLSPRKGVPLQLTAAHSSSQEVLATVPFHG.

The interval 40–111 (GSALPPQAPT…LSRGAGQGAP (72 aa)) is disordered. Residues 60-74 (SSRTPGPRPPRSTLR) show a composition bias toward low complexity.

This is an uncharacterized protein from Homo sapiens (Human).